A 208-amino-acid polypeptide reads, in one-letter code: Probable GTP-binding protein EngB (208 aa).

The region spanning 23–205 (LTSEMVVLGR…RQTLLKHLLT (183 aa)) is the EngB-type G domain. GTP is bound by residues 31–38 (GRSNVGKS), 57–61 (GKTRL), 84–87 (DLPG), 154–157 (TKFD), and 182–184 (FNA). Residues S38 and T59 each contribute to the Mg(2+) site.

The protein belongs to the TRAFAC class TrmE-Era-EngA-EngB-Septin-like GTPase superfamily. EngB GTPase family. Mg(2+) serves as cofactor.

Functionally, necessary for normal cell division and for the maintenance of normal septation. The sequence is that of Probable GTP-binding protein EngB from Helicobacter pylori (strain ATCC 700392 / 26695) (Campylobacter pylori).